A 322-amino-acid polypeptide reads, in one-letter code: 4-hydroxy-3-methylbut-2-enyl diphosphate reductase (322 aa).

Residue C15 participates in [4Fe-4S] cluster binding. H44 and H77 together coordinate (2E)-4-hydroxy-3-methylbut-2-enyl diphosphate. Residues H44 and H77 each contribute to the dimethylallyl diphosphate site. Isopentenyl diphosphate-binding residues include H44 and H77. C99 contacts [4Fe-4S] cluster. H127 lines the (2E)-4-hydroxy-3-methylbut-2-enyl diphosphate pocket. H127 is a dimethylallyl diphosphate binding site. Position 127 (H127) interacts with isopentenyl diphosphate. The active-site Proton donor is the E129. Residue T168 participates in (2E)-4-hydroxy-3-methylbut-2-enyl diphosphate binding. [4Fe-4S] cluster is bound at residue C198. S226, S227, N228, and S270 together coordinate (2E)-4-hydroxy-3-methylbut-2-enyl diphosphate. Dimethylallyl diphosphate is bound by residues S226, S227, N228, and S270. Positions 226, 227, 228, and 270 each coordinate isopentenyl diphosphate.

It belongs to the IspH family. Requires [4Fe-4S] cluster as cofactor.

The enzyme catalyses isopentenyl diphosphate + 2 oxidized [2Fe-2S]-[ferredoxin] + H2O = (2E)-4-hydroxy-3-methylbut-2-enyl diphosphate + 2 reduced [2Fe-2S]-[ferredoxin] + 2 H(+). It carries out the reaction dimethylallyl diphosphate + 2 oxidized [2Fe-2S]-[ferredoxin] + H2O = (2E)-4-hydroxy-3-methylbut-2-enyl diphosphate + 2 reduced [2Fe-2S]-[ferredoxin] + 2 H(+). The protein operates within isoprenoid biosynthesis; dimethylallyl diphosphate biosynthesis; dimethylallyl diphosphate from (2E)-4-hydroxy-3-methylbutenyl diphosphate: step 1/1. Its pathway is isoprenoid biosynthesis; isopentenyl diphosphate biosynthesis via DXP pathway; isopentenyl diphosphate from 1-deoxy-D-xylulose 5-phosphate: step 6/6. Catalyzes the conversion of 1-hydroxy-2-methyl-2-(E)-butenyl 4-diphosphate (HMBPP) into a mixture of isopentenyl diphosphate (IPP) and dimethylallyl diphosphate (DMAPP). Acts in the terminal step of the DOXP/MEP pathway for isoprenoid precursor biosynthesis. This is 4-hydroxy-3-methylbut-2-enyl diphosphate reductase from Neisseria meningitidis serogroup C (strain 053442).